The following is a 513-amino-acid chain: ATP synthase subunit alpha (513 aa).

Glycine 169–threonine 176 contacts ATP.

It belongs to the ATPase alpha/beta chains family. F-type ATPases have 2 components, CF(1) - the catalytic core - and CF(0) - the membrane proton channel. CF(1) has five subunits: alpha(3), beta(3), gamma(1), delta(1), epsilon(1). CF(0) has three main subunits: a(1), b(2) and c(9-12). The alpha and beta chains form an alternating ring which encloses part of the gamma chain. CF(1) is attached to CF(0) by a central stalk formed by the gamma and epsilon chains, while a peripheral stalk is formed by the delta and b chains.

Its subcellular location is the cell inner membrane. The enzyme catalyses ATP + H2O + 4 H(+)(in) = ADP + phosphate + 5 H(+)(out). In terms of biological role, produces ATP from ADP in the presence of a proton gradient across the membrane. The alpha chain is a regulatory subunit. The chain is ATP synthase subunit alpha from Citrobacter koseri (strain ATCC BAA-895 / CDC 4225-83 / SGSC4696).